The primary structure comprises 159 residues: uncharacterized protein (159 aa).

3 helical membrane-spanning segments follow: residues 76-96 (AIKYLIEGLAVAFVAYYFIGK), 104-124 (IVMLGITAACVFAILDVFSPT), and 131-151 (FGAGFGIGTSLFGLNPAVIGG).

The protein resides in the membrane. This is an uncharacterized protein from Acanthamoeba polyphaga (Amoeba).